A 197-amino-acid chain; its full sequence is DNA-directed RNA polymerases I, II, and III subunit rpabc1 (197 aa).

It belongs to the archaeal Rpo5/eukaryotic RPB5 RNA polymerase subunit family. As to quaternary structure, component of the RNA polymerase I (Pol I), RNA polymerase II (Pol II) and RNA polymerase III (Pol III) complexes consisting of at least 13, 12 and 17 subunits, respectively. In RNA Pol II, this subunit is present in 2-fold molar excess over the other subunits.

The protein localises to the nucleus. In terms of biological role, DNA-dependent RNA polymerase catalyzes the transcription of DNA into RNA using the four ribonucleoside triphosphates as substrates. Common component of RNA polymerases I, II and III which synthesize ribosomal RNA precursors, mRNA precursors and many functional non-coding RNAs, and small RNAs, such as 5S rRNA and tRNAs, respectively. Pol II is the central component of the basal RNA polymerase II transcription machinery. Pols are composed of mobile elements that move relative to each other. In Pol II, RPB5 is part of the lower jaw surrounding the central large cleft and thought to grab the incoming DNA template. Seems to be the major component in this process. The chain is DNA-directed RNA polymerases I, II, and III subunit rpabc1 (polr2e) from Dictyostelium discoideum (Social amoeba).